The chain runs to 120 residues: NAD(P)H-quinone oxidoreductase subunit 3, chloroplastic (120 aa).

3 helical membrane passes run phenylalanine 9–glycine 29, methionine 64–methionine 84, and valine 88–leucine 108.

The protein belongs to the complex I subunit 3 family. As to quaternary structure, NDH is composed of at least 16 different subunits, 5 of which are encoded in the nucleus.

The protein resides in the plastid. Its subcellular location is the chloroplast thylakoid membrane. The catalysed reaction is a plastoquinone + NADH + (n+1) H(+)(in) = a plastoquinol + NAD(+) + n H(+)(out). It carries out the reaction a plastoquinone + NADPH + (n+1) H(+)(in) = a plastoquinol + NADP(+) + n H(+)(out). In terms of biological role, NDH shuttles electrons from NAD(P)H:plastoquinone, via FMN and iron-sulfur (Fe-S) centers, to quinones in the photosynthetic chain and possibly in a chloroplast respiratory chain. The immediate electron acceptor for the enzyme in this species is believed to be plastoquinone. Couples the redox reaction to proton translocation, and thus conserves the redox energy in a proton gradient. This Nicotiana tabacum (Common tobacco) protein is NAD(P)H-quinone oxidoreductase subunit 3, chloroplastic.